A 367-amino-acid chain; its full sequence is Coiled-coil domain-containing protein 34 (367 aa).

Residue Ser55 is modified to Phosphoserine. Disordered stretches follow at residues 77–105 (FPFGADDSEGEDEEALDEDARESESKVES), 191–228 (QKKNKQERKEREQKINKEMEEKEAKKREKEHLQEKAKE), and 310–349 (YNPIPWKPIHMPPPKEAKSGPGKKSKRHAASQPLPSSSLA). Acidic residues predominate over residues 82–97 (DDSEGEDEEALDEDAR). Coiled coils occupy residues 87–108 (EDEEALDEDARESESKVESLEG) and 153–280 (RLQQ…AKNK). A compositionally biased stretch (basic and acidic residues) spans 197–228 (ERKEREQKINKEMEEKEAKKREKEHLQEKAKE). The span at 339–349 (ASQPLPSSSLA) shows a compositional bias: low complexity.

Expressed in testis and sperm.

The protein localises to the cell projection. It localises to the cilium. Its subcellular location is the flagellum. Functionally, involved in spermatogenesis. Has a probable role in anterograde intraflagellar transport which is essential for the formation of sperm flagella. This Mus musculus (Mouse) protein is Coiled-coil domain-containing protein 34 (Ccdc34).